The primary structure comprises 2560 residues: Plipastatin synthase subunit B (2560 aa).

A condensation 1 region spans residues 7 to 310 (IQDIYPLSHM…NTVPVRIRSA (304 aa)). The segment at 7-1042 (IQDIYPLSHM…AVKLMSLKEH (1036 aa)) is domain 1 (tyrosine-activating). Positions 496 to 889 (TYRQLQVRAN…QAPGVKEAAV (394 aa)) are adenylation 1. The 76-residue stretch at 965-1040 (APRTLIEADL…SMAVKLMSLK (76 aa)) folds into the Carrier 1 domain. Residue S1000 is modified to O-(pantetheine 4'-phosphoryl)serine. A condensation 2 region spans residues 1052–1342 (QRDVYPLSFS…NTLAMRSKPE (291 aa)). The tract at residues 1052–2553 (QRDVYPLSFS…DLTLDELSEI (1502 aa)) is domain 2 (D-allo-threonine-activating). Residues 1527-1927 (TYRDLNEKAE…QYPMIKEAAV (401 aa)) are adenylation 2. Residues 2006–2080 (SPRNEIETVM…ELSARVRKDV (75 aa)) form the Carrier 2 domain. At S2041 the chain carries O-(pantetheine 4'-phosphoryl)serine. The epimerization stretch occupies residues 2088 to 2553 (VEGEITWTPI…DLTLDELSEI (466 aa)).

This sequence belongs to the ATP-dependent AMP-binding enzyme family. It depends on pantetheine 4'-phosphate as a cofactor.

Functionally, this protein is a multifunctional enzyme, able to activate and polymerize the amino acids Tyr and Thr as part of the biosynthesis of the lipopeptide antibiotic plipastatin. The Thr residue is further converted to the D-allo-isomer form. The activation sites for these amino acids consist of individual domains. The polypeptide is Plipastatin synthase subunit B (ppsB) (Bacillus subtilis (strain 168)).